Here is a 33-residue protein sequence, read N- to C-terminus: Protamine (33 aa).

The tract at residues 1–33 (MPRRRRSSSRPVRRRRRPRVSRRRRRRGGRRRR) is disordered.

In terms of tissue distribution, testis.

The protein localises to the nucleus. It localises to the chromosome. Functionally, protamines substitute for histones in the chromatin of sperm during the haploid phase of spermatogenesis. They compact sperm DNA into a highly condensed, stable and inactive complex. This Oncorhynchus keta (Chum salmon) protein is Protamine.